The sequence spans 553 residues: Formate--tetrahydrofolate ligase (553 aa).

Residue 56–63 participates in ATP binding; it reads TPKGEGKT.

It belongs to the formate--tetrahydrofolate ligase family.

It catalyses the reaction (6S)-5,6,7,8-tetrahydrofolate + formate + ATP = (6R)-10-formyltetrahydrofolate + ADP + phosphate. It functions in the pathway one-carbon metabolism; tetrahydrofolate interconversion. This Haloarcula marismortui (strain ATCC 43049 / DSM 3752 / JCM 8966 / VKM B-1809) (Halobacterium marismortui) protein is Formate--tetrahydrofolate ligase.